The sequence spans 740 residues: Ethylene receptor 1 (740 aa).

Helical transmembrane passes span 23 to 43 (ISDF…IYFV), 53 to 73 (WVLV…LINL), and 95 to 115 (AAVS…LLSV). 2 residues coordinate Cu cation: Cys-65 and His-69. The GAF domain occupies 158-307 (DRHTILKTTL…VVADQVAVAL (150 aa)). Positions 350–587 (VMNHEMRTPM…TVTFVVKLGI (238 aa)) constitute a Histidine kinase domain. His-353 is modified (phosphohistidine; by autocatalysis). Positions 615–732 (KVLLMDENGI…KMRNVLSKLL (118 aa)) constitute a Response regulatory domain. The residue at position 663 (Asp-663) is a 4-aspartylphosphate.

It belongs to the ethylene receptor family. In terms of assembly, homodimer; disulfide-linked. Cu cation serves as cofactor. Post-translationally, activation probably requires a transfer of a phosphate group between a His in the transmitter domain and an Asp of the receiver domain.

It is found in the endoplasmic reticulum membrane. The enzyme catalyses ATP + protein L-histidine = ADP + protein N-phospho-L-histidine.. Its function is as follows. May act early in the ethylene signal transduction pathway, possibly as an ethylene receptor, or as a regulator of the pathway. In Pelargonium hortorum (Common geranium), this protein is Ethylene receptor 1 (ETR1).